Consider the following 238-residue polypeptide: Ubiquinone biosynthesis O-methyltransferase (238 aa).

Arginine 40, glycine 59, aspartate 81, and methionine 126 together coordinate S-adenosyl-L-methionine.

It belongs to the methyltransferase superfamily. UbiG/COQ3 family.

It catalyses the reaction a 3-demethylubiquinol + S-adenosyl-L-methionine = a ubiquinol + S-adenosyl-L-homocysteine + H(+). The catalysed reaction is a 3-(all-trans-polyprenyl)benzene-1,2-diol + S-adenosyl-L-methionine = a 2-methoxy-6-(all-trans-polyprenyl)phenol + S-adenosyl-L-homocysteine + H(+). The protein operates within cofactor biosynthesis; ubiquinone biosynthesis. Functionally, O-methyltransferase that catalyzes the 2 O-methylation steps in the ubiquinone biosynthetic pathway. In Neisseria meningitidis serogroup A / serotype 4A (strain DSM 15465 / Z2491), this protein is Ubiquinone biosynthesis O-methyltransferase.